Consider the following 321-residue polypeptide: Biotin synthase (321 aa).

The Radical SAM core domain occupies 45–271 (FFGKKVKLNM…INPSKEIRIA (227 aa)). Residues Cys-63, Cys-67, and Cys-70 each coordinate [4Fe-4S] cluster. 4 residues coordinate [2Fe-2S] cluster: Cys-106, Cys-139, Cys-199, and Arg-269.

Belongs to the radical SAM superfamily. Biotin synthase family. Homodimer. Requires [4Fe-4S] cluster as cofactor. [2Fe-2S] cluster serves as cofactor.

The enzyme catalyses (4R,5S)-dethiobiotin + (sulfur carrier)-SH + 2 reduced [2Fe-2S]-[ferredoxin] + 2 S-adenosyl-L-methionine = (sulfur carrier)-H + biotin + 2 5'-deoxyadenosine + 2 L-methionine + 2 oxidized [2Fe-2S]-[ferredoxin]. The protein operates within cofactor biosynthesis; biotin biosynthesis; biotin from 7,8-diaminononanoate: step 2/2. Its function is as follows. Catalyzes the conversion of dethiobiotin (DTB) to biotin by the insertion of a sulfur atom into dethiobiotin via a radical-based mechanism. This Staphylococcus haemolyticus (strain JCSC1435) protein is Biotin synthase.